A 186-amino-acid chain; its full sequence is Probable RNA 2'-phosphotransferase (186 aa).

It belongs to the KptA/TPT1 family.

In terms of biological role, removes the 2'-phosphate from RNA via an intermediate in which the phosphate is ADP-ribosylated by NAD followed by a presumed transesterification to release the RNA and generate ADP-ribose 1''-2''-cyclic phosphate (APPR&gt;P). May function as an ADP-ribosylase. This chain is Probable RNA 2'-phosphotransferase, found in Hahella chejuensis (strain KCTC 2396).